The following is a 190-amino-acid chain: uncharacterized protein (190 aa).

Disordered stretches follow at residues 1–21 (MALR…ATVG) and 155–190 (PEMG…TQAS). Residues 181-190 (SPSSHPTQAS) show a composition bias toward low complexity.

This is an uncharacterized protein from Homo sapiens (Human).